The sequence spans 483 residues: Serine/threonine-protein kinase BSK4 (483 aa).

G2 carries the N-myristoyl glycine lipid modification. Residues 56 to 322 (ENVVSEHGET…DTEVLSHVLM (267 aa)) enclose the Protein kinase domain. Residues 62-70 (HGETAPNVV) and K84 each bind ATP. The Proton acceptor role is filled by D178.

The protein belongs to the protein kinase superfamily. Ser/Thr protein kinase family.

It localises to the cell membrane. It carries out the reaction L-seryl-[protein] + ATP = O-phospho-L-seryl-[protein] + ADP + H(+). The enzyme catalyses L-threonyl-[protein] + ATP = O-phospho-L-threonyl-[protein] + ADP + H(+). Its function is as follows. Probable serine/threonine kinase that acts as a positive regulator of brassinosteroid (BR) signaling downstream of the receptor kinase BRI1. Functions redundantly with BSK3, BSK6, BSK7 and BSK8. In Arabidopsis thaliana (Mouse-ear cress), this protein is Serine/threonine-protein kinase BSK4.